Here is a 1372-residue protein sequence, read N- to C-terminus: Collagen alpha-2(I) chain (1372 aa).

The N-terminal stretch at 1–22 (MLSFVDTRTLLLLAVTSCLATC) is a signal peptide. Gln23 is subject to Pyrrolidone carboxylic acid. Residues 23 to 85 (QYLQSGSVRK…PPGLTGNFAA (63 aa)) constitute a propeptide, N-terminal propeptide. Positions 28–1135 (GSVRKGPTGD…DQPRSQPSLR (1108 aa)) are disordered. Over residues 59 to 77 (MGPPGPPGSPGPPGSPAPP) the composition is skewed to pro residues. Lys90 carries the allysine modification. Residues 95-146 (GPGPMGLMGPRGPPGAVGAPGPQGFQGPAGEPGEPGQTGPAGPRGPAGSPGK) show a composition bias toward low complexity. The segment covering 147 to 161 (AGEDGHPGKPGRPGE) has biased composition (basic and acidic residues). A 5-hydroxylysine; alternate modification is found at Lys183. A glycan (O-linked (Gal...) hydroxylysine; alternate) is linked at Lys183. 7 stretches are compositionally biased toward low complexity: residues 231–260 (VGAPGPAGARGSDGSVGPVGPAGPIGSAGP), 285–299 (AGPRGEVGLPGLSGP), 306–327 (PGTNGLTGAKGATGLPGVAGAP), 336–351 (PGPAGAAGATGARGLV), 390–416 (PGEAGSAGPAGPPGLRGSPGSRGLPGA), 476–495 (LPGIDGRPGPIGPAGPRGEA), and 519–537 (PGLAGARGAPGPDGNNGAQ). The segment covering 544–553 (GVQGGKGEQG) has biased composition (gly residues). The span at 600–639 (PGESGAAGPSGPIGSRGPSGAPGPDGNKGEAGAVGAPGSA) shows a compositional bias: low complexity. The segment covering 640 to 649 (GASGPGGLPG) has biased composition (gly residues). 2 stretches are compositionally biased toward low complexity: residues 681–716 (RGIPGAVGAPGPAGASGDRGEAGAAGPSGPAGPRGS) and 725–743 (PAGPNGFAGPAGAAGQPGA). The segment covering 744-753 (KGEKGTKGPK) has biased composition (basic and acidic residues). Over residues 755–771 (ENGIVGPTGSVGAAGPS) the composition is skewed to low complexity. Residues 781–790 (GSRGDGGPPG) are compositionally biased toward gly residues. Composition is skewed to low complexity over residues 792–801 (TGFPGAAGRT), 855–882 (SGEPGTAGAPGTAGPQGLLGAPGILGLP), 905–927 (ISGPPGARGPPGAVGSPGVNGAP), 957–978 (PGSIGPTGAAGAPGPHGSVGPA), and 987–1007 (PGPAGSVGPVGAVGPRGPSGP). Residues 1011–1022 (RGDKGEPGDKGH) show a composition bias toward basic and acidic residues. The segment covering 1095–1107 (AGPPGPPGPPGPP) has biased composition (pro residues). A propeptide spans 1126–1372 (DQPRSQPSLR…RVEVGPVCFK (247 aa)) (C-terminal propeptide). Residues 1139–1372 (YEVDATLKSL…RVEVGPVCFK (234 aa)) form the Fibrillar collagen NC1 domain. 3 cysteine pairs are disulfide-bonded: Cys1169–Cys1201, Cys1209–Cys1370, and Cys1278–Cys1323. The Ca(2+) site is built by Asp1187, Asn1189, Gln1190, Cys1192, and Asp1195. An N-linked (GlcNAc...) asparagine glycan is attached at Asn1273.

The protein belongs to the fibrillar collagen family. As to quaternary structure, trimers of one alpha 2(I) and two alpha 1(I) chains. Interacts (via C-terminus) with TMEM131 (via PapD-L domain); the interaction is direct and is involved in assembly and TRAPPIII ER-to-Golgi transport complex-dependent secretion of collagen. Post-translationally, prolines at the third position of the tripeptide repeating unit (G-X-Y) are hydroxylated in some or all of the chains. Expressed in kidney glomeruli.

It is found in the secreted. Its subcellular location is the extracellular space. The protein resides in the extracellular matrix. In terms of biological role, type I collagen is a member of group I collagen (fibrillar forming collagen). In Mus musculus (Mouse), this protein is Collagen alpha-2(I) chain (Col1a2).